Here is a 564-residue protein sequence, read N- to C-terminus: Kelch repeat and BTB domain-containing protein 1 (564 aa).

Positions 21–88 constitute a BTB domain; sequence CDINIVINDE…IYGIPLSLTN (68 aa). The BACK domain occupies 123–219; it reads CIDFYIYADK…SLLSPQVIKS (97 aa). 5 Kelch repeats span residues 252–297, 298–346, 347–395, 397–441, and 442–492; these read IELI…VLDN, IIYM…ADDE, YIYC…MLNG, IYVI…VHDG, and KIYI…STHN.

In terms of assembly, interacts (via BTB domain) with host CUL3.

The protein resides in the host cytoplasm. Its function is as follows. Probable substrate-specific adapter of CUL3-containing E3 ubiquitin-protein ligases which mediate the ubiquitination and subsequent proteasomal degradation of host target proteins. This is Kelch repeat and BTB domain-containing protein 1 (KBTB1) from Bos taurus (Bovine).